The sequence spans 225 residues: Superoxide dismutase [Mn], mitochondrial (225 aa).

The N-terminal 27 residues, 1 to 27, are a transit peptide targeting the mitochondrion; sequence MITAITRTALPRATLRTSLATMSTIRA. Mn(2+) contacts are provided by histidine 53, histidine 101, aspartate 187, and histidine 191.

It belongs to the iron/manganese superoxide dismutase family. The cofactor is Mn(2+).

The protein resides in the mitochondrion. Its subcellular location is the cytoplasm. It carries out the reaction 2 superoxide + 2 H(+) = H2O2 + O2. Destroys radicals which are normally produced within the cells and which are toxic to biological systems. Its function is as follows. Destroys mitochondrial radicals produced by oxidative stress. Functionally, destroys cytoplasmic radicals produced in low copper environments; a condition which inactivates the cytoplasmic copper-dependent superoxide dismutase SOD1. In Cryptococcus neoformans var. grubii serotype A (strain H99 / ATCC 208821 / CBS 10515 / FGSC 9487) (Filobasidiella neoformans var. grubii), this protein is Superoxide dismutase [Mn], mitochondrial.